A 274-amino-acid polypeptide reads, in one-letter code: Undecaprenyl-diphosphatase (274 aa).

6 consecutive transmembrane segments (helical) span residues 44–64 (AKVF…LVYW), 85–105 (LNVL…GKAI), 109–129 (LFTP…ILWA), 185–205 (ATDY…VYSL), 215–235 (ADIP…WLCV), and 250–270 (FAWY…SGLV).

It belongs to the UppP family.

The protein localises to the cell inner membrane. The catalysed reaction is di-trans,octa-cis-undecaprenyl diphosphate + H2O = di-trans,octa-cis-undecaprenyl phosphate + phosphate + H(+). Catalyzes the dephosphorylation of undecaprenyl diphosphate (UPP). Confers resistance to bacitracin. The sequence is that of Undecaprenyl-diphosphatase from Acidovorax ebreus (strain TPSY) (Diaphorobacter sp. (strain TPSY)).